The chain runs to 451 residues: Lysine histidine transporter-like 3 (451 aa).

At M1–Y40 the chain is on the cytoplasmic side. A helical membrane pass occupies residues S41–M61. Over S62 to E63 the chain is Extracellular. A helical transmembrane segment spans residues L64–F84. The Cytoplasmic portion of the chain corresponds to W85 to G115. A helical membrane pass occupies residues L116 to V136. Residues T137 to K159 lie on the Extracellular side of the membrane. The chain crosses the membrane as a helical span at residues V160–L177. Over K178–S182 the chain is Cytoplasmic. Residues I183–V203 traverse the membrane as a helical segment. At A204–P227 the chain is on the extracellular side. Residues L228–L248 form a helical membrane-spanning segment. The Cytoplasmic portion of the chain corresponds to E249–G269. Residues A270 to W290 traverse the membrane as a helical segment. Residues T291–G309 are Extracellular-facing. Residues L310–A330 traverse the membrane as a helical segment. The Cytoplasmic portion of the chain corresponds to M331 to R358. A helical transmembrane segment spans residues W359–L379. A topological domain (extracellular) is located at residue S380. The helical transmembrane segment at F381–I401 threads the bilayer. Over L402–C413 the chain is Cytoplasmic. Residues I414–L434 form a helical membrane-spanning segment. Residues A435–T451 lie on the Extracellular side of the membrane.

Belongs to the amino acid/polyamine transporter 2 family. Amino acid/auxin permease (AAAP) (TC 2.A.18.2) subfamily.

It is found in the cell membrane. In terms of biological role, amino acid transporter. This chain is Lysine histidine transporter-like 3, found in Arabidopsis thaliana (Mouse-ear cress).